We begin with the raw amino-acid sequence, 352 residues long: Glycerol-3-phosphate dehydrogenase [NAD(P)+] (352 aa).

NADPH-binding residues include serine 11, tryptophan 12, arginine 32, and lysine 105. 3 residues coordinate sn-glycerol 3-phosphate: lysine 105, glycine 133, and serine 135. Alanine 137 is an NADPH binding site. Positions 188, 241, 251, 252, and 253 each coordinate sn-glycerol 3-phosphate. Catalysis depends on lysine 188, which acts as the Proton acceptor. NADPH is bound at residue arginine 252. NADPH-binding residues include valine 276 and glutamate 278.

The protein belongs to the NAD-dependent glycerol-3-phosphate dehydrogenase family.

The protein localises to the cytoplasm. The enzyme catalyses sn-glycerol 3-phosphate + NAD(+) = dihydroxyacetone phosphate + NADH + H(+). It catalyses the reaction sn-glycerol 3-phosphate + NADP(+) = dihydroxyacetone phosphate + NADPH + H(+). It functions in the pathway membrane lipid metabolism; glycerophospholipid metabolism. Its function is as follows. Catalyzes the reduction of the glycolytic intermediate dihydroxyacetone phosphate (DHAP) to sn-glycerol 3-phosphate (G3P), the key precursor for phospholipid synthesis. The polypeptide is Glycerol-3-phosphate dehydrogenase [NAD(P)+] (Desulfitobacterium hafniense (strain Y51)).